The sequence spans 153 residues: Protein SREK1IP1 (153 aa).

Residues 13–30 (AGCRKCGYPGHLTFECRN) form a CCHC-type zinc finger. The segment at 44 to 153 (VSSTSSEDSD…SPNRSEVTKK (110 aa)) is disordered. S52 bears the Phosphoserine mark. A compositionally biased stretch (basic and acidic residues) spans 66–84 (QEKRINEEEEKKKEKSREK). Residues 85-94 (IKLKKKRKRS) show a composition bias toward basic residues. S96 and S97 each carry phosphoserine. Positions 106 to 141 (QKKQKYQKKEKKKEKKNKSKKGKHHKKEKKKRKKEK) are enriched in basic residues.

In terms of assembly, interacts with SREK1/SFRS12.

Its function is as follows. Possible splicing regulator involved in the control of cellular survival. The chain is Protein SREK1IP1 (Srek1ip1) from Rattus norvegicus (Rat).